The primary structure comprises 461 residues: MAVLTHSRRALSTNPLKTSAPLGAAMAYLGIEGAVPLFHGAQGCTAFGVVHLVRHFKEAVPLQTTAMNEVSTILGGGEQIEEAIDNIRKRANPKFIGIASTALTETRGEDIAGELRAMQVRRKDWVGTAVVHVITPDFEGGQQDGWAKAVEAIVAALVPVTAERDPDLRQVTLLVPSCFTTAEIDEAVRMIRAFGLSPIVLPDLSTSLDGHLSDDWSGHSLGGTRLDDIARIPRSAVTLAIGEQMRAAAPMIEDRALVPYRVFQSLTGLKVVDAFVRVLMELSGMQDPPPSTKRDRARMMDAALDAHFFTGGLRVAIGADPDLMFALSTALVSMGAEIVTAVTTTQNSALIEKMPCAEVILGDLGDVERGAGQAEAQILITHSHGRHAAAALHLPLVRAGFPIFDRIGAQDTCRIGYRGTRAFFFEIANAMQAIHHRPRPEDFGAAPIPQEFDHVPHPAPC.

Residue C44 participates in [7Fe-Mo-9S-C-homocitryl] cluster binding.

Belongs to the NifD/NifK/NifE/NifN family.

Its pathway is cofactor biosynthesis; Fe-Mo cofactor biosynthesis. In terms of biological role, this protein may play a role in the biosynthesis of the prosthetic group of nitrogenase (FeMo cofactor). The sequence is that of Nitrogenase iron-molybdenum cofactor biosynthesis protein NifN (nifN) from Rhodobacter capsulatus (Rhodopseudomonas capsulata).